Here is a 233-residue protein sequence, read N- to C-terminus: Large ribosomal subunit protein uL1 (233 aa).

It belongs to the universal ribosomal protein uL1 family. In terms of assembly, part of the 50S ribosomal subunit.

In terms of biological role, binds directly to 23S rRNA. The L1 stalk is quite mobile in the ribosome, and is involved in E site tRNA release. Functionally, protein L1 is also a translational repressor protein, it controls the translation of the L11 operon by binding to its mRNA. This Thermotoga petrophila (strain ATCC BAA-488 / DSM 13995 / JCM 10881 / RKU-1) protein is Large ribosomal subunit protein uL1.